A 55-amino-acid polypeptide reads, in one-letter code: uncharacterized protein (55 aa).

Residues 1 to 25 (MKFVKAIWPFVAVAIVFMFMSAFKF) form the signal peptide.

This is an uncharacterized protein from Bacillus subtilis (strain 168).